Reading from the N-terminus, the 351-residue chain is AA9 family lytic polysaccharide monooxygenase A (351 aa).

Position 1 (His-1) interacts with Cu(2+). Cys-52 and Cys-178 are oxidised to a cystine. A glycan (N-linked (GlcNAc...) asparagine) is linked at Asn-53. His-86 serves as a coordination point for Cu(2+). An N-linked (GlcNAc...) asparagine glycan is attached at Asn-138. Residues His-164 and Gln-173 each contribute to the O2 site. Position 175 (Tyr-175) interacts with Cu(2+). The GPI-anchor amidated serine moiety is linked to residue Ser-280. Residues Ser-281–Phe-351 constitute a propeptide, removed in mature form.

It belongs to the polysaccharide monooxygenase AA9 family. Cu(2+) is required as a cofactor.

The protein localises to the cell membrane. It catalyses the reaction [(1-&gt;4)-beta-D-glucosyl]n+m + reduced acceptor + O2 = 4-dehydro-beta-D-glucosyl-[(1-&gt;4)-beta-D-glucosyl]n-1 + [(1-&gt;4)-beta-D-glucosyl]m + acceptor + H2O.. Lytic polysaccharide monooxygenase (LPMO) that depolymerizes crystalline and amorphous polysaccharides via the oxidation of scissile alpha- or beta-(1-4)-glycosidic bonds, yielding C1 or C4 oxidation products. Catalysis by LPMOs requires the reduction of the active-site copper from Cu(II) to Cu(I) by a reducing agent and H(2)O(2) or O(2) as a cosubstrate. Functionally, has broad specificity, cleaving at any position along the beta-glucan backbone of xyloglucan, regardless of substitutions. Shows minor activity on glucomannan. The polypeptide is AA9 family lytic polysaccharide monooxygenase A (Gloeophyllum trabeum (Brown rot fungus)).